A 166-amino-acid chain; its full sequence is Lactose-binding lectin l-2 (166 aa).

A signal peptide spans 1 to 24 (MVSFKLPAFLCVAVLSSMALVSHG). 3 disulfides stabilise this stretch: Cys34–Cys45, Cys62–Cys160, and Cys136–Cys152. Residues 41 to 161 (HKNRCYLHVA…CDLLFPSICV (121 aa)) enclose the C-type lectin domain.

Homodimer; disulfide-linked. Skin; contained within club cells which are a component of the epidermis in combination with epithelial cells and mucus cells (at protein level).

Its subcellular location is the secreted. Its function is as follows. Involved in host defense at the body surface. Causes agglutination and suppresses the growth of the Gram-negative bacterium E.coli K12. Possesses calcium-independent hemagglutinating activity. The polypeptide is Lactose-binding lectin l-2 (Anguilla japonica (Japanese eel)).